The sequence spans 934 residues: Sorting nexin-14 (934 aa).

Transmembrane regions (helical) follow at residues 27–47 and 48–68; these read YPVI…LNQY and LHIL…YCSL. Positions 129–303 constitute a PXA domain; it reads PSKVDASISE…MVLIFIDDSP (175 aa). Residues 335–467 enclose the RGS domain; it reads DLKEIREQQD…CHSDEYFRHL (133 aa). The PX domain occupies 557–677; it reads WTISIPYVDF…DFLSPFSMES (121 aa).

Belongs to the sorting nexin family.

It is found in the lysosome membrane. Its subcellular location is the late endosome membrane. The protein resides in the cell projection. The protein localises to the dendrite. Plays a role in maintaining normal neuronal excitability and synaptic transmission. May be involved in several stages of intracellular trafficking. Required for autophagosome clearance, possibly by mediating the fusion of lysosomes with autophagosomes. Binds phosphatidylinositol 3,5-bisphosphate (PtdIns(3,5)P2), a key component of late endosomes/lysosomes. Does not bind phosphatidylinositol 3-phosphate (PtdIns(3P)). The chain is Sorting nexin-14 from Danio rerio (Zebrafish).